Consider the following 88-residue polypeptide: Small ribosomal subunit protein bS16c (88 aa).

The protein belongs to the bacterial ribosomal protein bS16 family.

It is found in the plastid. Its subcellular location is the chloroplast. This is Small ribosomal subunit protein bS16c from Calycanthus floridus var. glaucus (Eastern sweetshrub).